We begin with the raw amino-acid sequence, 64 residues long: Outer envelope membrane protein 7 (64 aa).

At 1–11 (MGKTSGAKQAT) the chain is on the chloroplast intermembrane side. Residues 12-32 (VVVAAMALGWLAIEIAFKPFL) traverse the membrane as a helical segment. The AKR2A-binding sequence (ABS) required for chloroplast outer envelope membrane targeting signature appears at 29-35 (KPFLDKF). Topologically, residues 33-64 (DKFRSSIDKSDPTKDPDDFDTAATATTSKEGL) are cytoplasmic. Residues 39–48 (IDKSDPTKDP) are compositionally biased toward basic and acidic residues. The disordered stretch occupies residues 39–64 (IDKSDPTKDPDDFDTAATATTSKEGL). Low complexity predominate over residues 53-64 (TAATATTSKEGL).

Interacts with AKR2A. As to expression, confined to green tissues.

The protein localises to the plastid. It is found in the chloroplast outer membrane. The sequence is that of Outer envelope membrane protein 7 from Arabidopsis thaliana (Mouse-ear cress).